The chain runs to 167 residues: 2-C-methyl-D-erythritol 2,4-cyclodiphosphate synthase (167 aa).

A divalent metal cation-binding residues include Asp-15 and His-17. Residues Asp-15–His-17 and His-43–Ser-44 each bind 4-CDP-2-C-methyl-D-erythritol 2-phosphate. Residue His-51 coordinates a divalent metal cation. Residues Asp-65–Gly-67, Thr-141–Glu-144, and Arg-151 contribute to the 4-CDP-2-C-methyl-D-erythritol 2-phosphate site.

This sequence belongs to the IspF family. Homotrimer. Requires a divalent metal cation as cofactor.

The enzyme catalyses 4-CDP-2-C-methyl-D-erythritol 2-phosphate = 2-C-methyl-D-erythritol 2,4-cyclic diphosphate + CMP. The protein operates within isoprenoid biosynthesis; isopentenyl diphosphate biosynthesis via DXP pathway; isopentenyl diphosphate from 1-deoxy-D-xylulose 5-phosphate: step 4/6. In terms of biological role, involved in the biosynthesis of isopentenyl diphosphate (IPP) and dimethylallyl diphosphate (DMAPP), two major building blocks of isoprenoid compounds. Catalyzes the conversion of 4-diphosphocytidyl-2-C-methyl-D-erythritol 2-phosphate (CDP-ME2P) to 2-C-methyl-D-erythritol 2,4-cyclodiphosphate (ME-CPP) with a corresponding release of cytidine 5-monophosphate (CMP). The polypeptide is 2-C-methyl-D-erythritol 2,4-cyclodiphosphate synthase (Prochlorococcus marinus (strain MIT 9312)).